The primary structure comprises 99 residues: Integration host factor subunit alpha (99 aa).

Positions 49–73 (FGNFDLRDKNQRPGRNPKTGEDIPI) are disordered.

Belongs to the bacterial histone-like protein family. As to quaternary structure, heterodimer of an alpha and a beta chain.

Its function is as follows. This protein is one of the two subunits of integration host factor, a specific DNA-binding protein that functions in genetic recombination as well as in transcriptional and translational control. This chain is Integration host factor subunit alpha (ihfA), found in Serratia marcescens.